Reading from the N-terminus, the 395-residue chain is Probable beta-1,3-galactosyltransferase 8 (395 aa).

A helical; Signal-anchor for type II membrane protein membrane pass occupies residues 5 to 27; that stretch reads AASGKAIIVLCLASFLAGSLFMS. Asn-117 carries N-linked (GlcNAc...) asparagine glycosylation.

The protein belongs to the glycosyltransferase 31 family. Mn(2+) serves as cofactor.

Its subcellular location is the golgi apparatus membrane. It functions in the pathway protein modification; protein glycosylation. In terms of biological role, beta-1,3-galactosyltransferase that transfers galactose from UDP-galactose to substrates with a terminal glycosyl residue. The polypeptide is Probable beta-1,3-galactosyltransferase 8 (B3GALT8) (Arabidopsis thaliana (Mouse-ear cress)).